Reading from the N-terminus, the 847-residue chain is Leucine--tRNA ligase (847 aa).

The short motif at 39–49 (PYPSGALHMGH) is the 'HIGH' region element. The 'KMSKS' region signature appears at 613–617 (KMSKS). Lysine 616 provides a ligand contact to ATP.

Belongs to the class-I aminoacyl-tRNA synthetase family.

It is found in the cytoplasm. The enzyme catalyses tRNA(Leu) + L-leucine + ATP = L-leucyl-tRNA(Leu) + AMP + diphosphate. In Gloeobacter violaceus (strain ATCC 29082 / PCC 7421), this protein is Leucine--tRNA ligase.